A 176-amino-acid chain; its full sequence is Lipoprotein signal peptidase (176 aa).

A run of 4 helical transmembrane segments spans residues leucine 10–leucine 30, valine 48–phenylalanine 68, tyrosine 78–methionine 98, and methionine 102–aspartate 122. Active-site residues include aspartate 131 and aspartate 149. The chain crosses the membrane as a helical span at residues histidine 141–isoleucine 161.

It belongs to the peptidase A8 family.

The protein localises to the cell inner membrane. The enzyme catalyses Release of signal peptides from bacterial membrane prolipoproteins. Hydrolyzes -Xaa-Yaa-Zaa-|-(S,diacylglyceryl)Cys-, in which Xaa is hydrophobic (preferably Leu), and Yaa (Ala or Ser) and Zaa (Gly or Ala) have small, neutral side chains.. It functions in the pathway protein modification; lipoprotein biosynthesis (signal peptide cleavage). In terms of biological role, this protein specifically catalyzes the removal of signal peptides from prolipoproteins. The protein is Lipoprotein signal peptidase of Acinetobacter baumannii (strain SDF).